The primary structure comprises 110 residues: Class I hydrophobin Po.HYD (110 aa).

A signal peptide spans 1-27 (MFSKATLFFTTVSRYRDTQAPIPTGQT). 4 cysteine pairs are disulfide-bonded: cysteine 35–cysteine 91, cysteine 42–cysteine 85, cysteine 43–cysteine 75, and cysteine 92–cysteine 105.

Belongs to the fungal hydrophobin family. Self-assembles to form functional amyloid fibrils called rodlets. Self-assembly into fibrillar rodlets occurs spontaneously at hydrophobic:hydrophilic interfaces and the rodlets further associate laterally to form amphipathic monolayers.

It localises to the secreted. Its subcellular location is the cell wall. Functionally, aerial growth, conidiation, and dispersal of filamentous fungi in the environment rely upon a capability of their secreting small amphipathic proteins called hydrophobins (HPBs) with low sequence identity. Class I can self-assemble into an outermost layer of rodlet bundles on aerial cell surfaces, conferring cellular hydrophobicity that supports fungal growth, development and dispersal; whereas Class II form highly ordered films at water-air interfaces through intermolecular interactions but contribute nothing to the rodlet structure. The sequence is that of Class I hydrophobin Po.HYD from Pleurotus ostreatus (Oyster mushroom).